Reading from the N-terminus, the 317-residue chain is Ribosomal RNA small subunit methyltransferase H (317 aa).

S-adenosyl-L-methionine-binding positions include 39–41, D59, F83, D104, and Q111; that span reads GGH.

The protein belongs to the methyltransferase superfamily. RsmH family.

The protein localises to the cytoplasm. The enzyme catalyses cytidine(1402) in 16S rRNA + S-adenosyl-L-methionine = N(4)-methylcytidine(1402) in 16S rRNA + S-adenosyl-L-homocysteine + H(+). In terms of biological role, specifically methylates the N4 position of cytidine in position 1402 (C1402) of 16S rRNA. The chain is Ribosomal RNA small subunit methyltransferase H from Paraburkholderia phymatum (strain DSM 17167 / CIP 108236 / LMG 21445 / STM815) (Burkholderia phymatum).